Here is a 389-residue protein sequence, read N- to C-terminus: Chalcone synthase 6 (389 aa).

Cysteine 164 is a catalytic residue.

It belongs to the thiolase-like superfamily. Chalcone/stilbene synthases family.

It carries out the reaction (E)-4-coumaroyl-CoA + 3 malonyl-CoA + 3 H(+) = 2',4,4',6'-tetrahydroxychalcone + 3 CO2 + 4 CoA. It functions in the pathway secondary metabolite biosynthesis; flavonoid biosynthesis. The primary product of this enzyme is 4,2',4',6'-tetrahydroxychalcone (also termed naringenin-chalcone or chalcone) which can under specific conditions spontaneously isomerize into naringenin. The sequence is that of Chalcone synthase 6 (CHS6) from Pisum sativum (Garden pea).